We begin with the raw amino-acid sequence, 818 residues long: Cation/H(+) antiporter 6A (818 aa).

A run of 13 helical transmembrane segments spans residues 51–71 (NFWEYPLPNLEILIFSTFFIW), 88–110 (FTYMMIAGIILGQTCHFSNKSWI), 123–143 (VAETLGAFGFVLYWFLKGVTM), 156–176 (SVIGFITVIIPLICGSLTFRY), 192–212 (LIIFLQSISAFTSIDTLLKDL), 222–242 (IALSGAMVTDMLAFGVTFFNA), 248–268 (LYGFMQTVGFCLFVVVMICVV), 288–308 (FYLYSIFGIAFACFTFFNKVI), 310–330 (LFGPAGSFVFGLTVPNGYPLG), 340–360 (FNLGSILPLFGSLTMMQVDLL), 376–396 (IYEVISFILLVNTTKFVVTTI), 409–429 (FALALVLSNKGIFELAYYTYA), and 438–458 (EVFTILAAYTLLNSIFIPMLL).

Belongs to the monovalent cation:proton antiporter 2 (CPA2) transporter (TC 2.A.37) family. CHX (TC 2.A.37.4) subfamily. Preferentially expressed in pollen.

Its subcellular location is the membrane. May operate as a cation/H(+) antiporter. The chain is Cation/H(+) antiporter 6A (CHX6a) from Arabidopsis thaliana (Mouse-ear cress).